We begin with the raw amino-acid sequence, 38 residues long: Large ribosomal subunit protein bL36 (38 aa).

The protein belongs to the bacterial ribosomal protein bL36 family.

The sequence is that of Large ribosomal subunit protein bL36 from Prochlorococcus marinus (strain MIT 9312).